Here is a 919-residue protein sequence, read N- to C-terminus: WD repeat-containing protein 47 (919 aa).

The 33-residue stretch at 10–42 folds into the LisH domain; the sequence is KEVEIIKLILDFLNSKKLHISMLALEKESGVIN. In terms of domain architecture, CTLH spans 45–102; it reads FSDDMLFLRQLILDGQWDEVLQFIQPLECMEKFDKKRFRYIILKQKFLEALCVNNAMS. A Phosphothreonine modification is found at T285. Phosphoserine occurs at positions 289, 292, 297, and 312. The interval 393–421 is disordered; it reads GQSSVSEKEPANGAQNPGPAKQEKNELRD. A Phosphoserine modification is found at S422. The tract at residues 500–590 is disordered; the sequence is LNQQCNGSKG…SLSRSKGEED (91 aa). Residues 517-551 show a composition bias toward polar residues; sequence VTSFTTPPQDSSQRLTHDASNIHTSTPRNPGSTNH. T542 carries the phosphothreonine modification. 7 WD repeats span residues 604-643, 659-698, 706-748, 753-791, 798-837, 840-879, and 886-918; these read EDTQ…DPSA, HHKG…CNAT, MHDG…GQGL, GHTG…CVRV, GTGS…MVQS, PHSS…TKQL, and EHKD…WTYN.

In terms of assembly, interacts with MAP1S (via WD repeats).

The protein localises to the cytoplasm. The protein resides in the cytoskeleton. The polypeptide is WD repeat-containing protein 47 (WDR47) (Homo sapiens (Human)).